Here is a 425-residue protein sequence, read N- to C-terminus: MKDKPLKLTVEKLVYGGYGFSRLNGKAVFVRFASPKELVEAKVVKEKKDYTEAVVTKVLISSPARRKAPCPYYGECGGCQIQHLNYEEQLRSKKDILLESLERIGKIKEVPYEGEIPSKKEFNYRVRVQFKIQENRVGFYRWDVKEVVDVEECLLAHERINELIPHIREVLKVIKDLQEVHVNYSPTRDEATLKFVTITHTDEKLLQNILENVLPEWVVGIGDYGKVGNSLVKRYKVGREHIFMDVGKWQYRVSNDSFFQVNYTLWEDFLKEVLDFSESYKKGLDLHCGVGFFTIPLSEQGNFIEGADANPSAIKDAEYNAKINNRDNVIFEEATAFKHLKRRIGEVINLVVVDPPRSGLLREERDLLLKNKPDKIVYISCNPTTFARDLKILTKGGYELKRLKLIDNFPQTYHIESIALLEVKD.

The TRAM domain maps to 1-57; that stretch reads MKDKPLKLTVEKLVYGGYGFSRLNGKAVFVRFASPKELVEAKVVKEKKDYTEAVVTK. Residues cysteine 70, cysteine 76, cysteine 79, and cysteine 153 each coordinate [4Fe-4S] cluster. The S-adenosyl-L-methionine site is built by glutamine 260, aspartate 308, and aspartate 354. Catalysis depends on cysteine 381, which acts as the Nucleophile.

Belongs to the class I-like SAM-binding methyltransferase superfamily. RNA M5U methyltransferase family.

This is an uncharacterized protein from Aquifex aeolicus (strain VF5).